We begin with the raw amino-acid sequence, 572 residues long: Cytochrome P450 monooxygenase xilC (572 aa).

Position 515 (Cys515) interacts with heme.

It belongs to the cytochrome P450 family. Requires heme as cofactor.

It participates in secondary metabolite biosynthesis. Functionally, cytochrome P450 monooxygenase; part of the gene cluster that mediates the biosynthesis of the 6-methyl-2-pyrone derivative xylariolide D. XilC hydroxylates the 5-alkyl-6-methyl-2-pyrone backbone called prexylariolide D, produced by the highly reducing polyketide synthase xilA, on its side chain to form xylariolide D. The sequence is that of Cytochrome P450 monooxygenase xilC from Penicillium crustosum (Blue mold fungus).